A 601-amino-acid polypeptide reads, in one-letter code: MSNQLEHIRNFSIIAHIDHGKSTIADRFIHLCGGLTDREMAAQVLDSMDLERERGITIKAQSVTLNYLSDDGQTYQLNFIDTPGHVDFSYEVSRSLAACEGALLVVDASQGVEAQTVANCYTAIEQGLEVLPVLNKIDLPAADPERVVDEIEEIIGIEAHDAVHASAKSGVGIKETLEEIVRKIPAPEGDLDAPLKALIIDSWFDNYLGVVSLVRVIDGKISKKIKMKIMSTKEEYVVDEVGIFTPKRTPRDSLSAGEVGYVIAGIKDIDGAPVGDTITISGNESAPLPGFKPVQPRVFAGLFPISSEDFEDLREALRKLRLNDAALHFEPESSDALGFGFRCGFLGMLHMEIIQERLEREYNLDLITTAPTVIYEVLTKKGDLLSIDNPSSLPDPSLIEEIREPIIQANILVPNEYVGAVMKLCLEKRGVQKDMQYVGNQVSIHYEMPLNEVVLDFFDRLKSTSRGYASMEYDFKRFQADDLVKLEFLVNSEPVDALAIIVHKATAVQRGKALIEKLRKIIPRQMFDVAIQAAIGAKIIGRTNVKALRKNVTAKCYGGDVSRKKKLLQKQKEGKKRMKSIGSVELPQEAFLAVLSTSEED.

One can recognise a tr-type G domain in the interval 6-188 (EHIRNFSIIA…EIVRKIPAPE (183 aa)). Residues 18 to 23 (DHGKST) and 135 to 138 (NKID) each bind GTP.

Belongs to the TRAFAC class translation factor GTPase superfamily. Classic translation factor GTPase family. LepA subfamily.

Its subcellular location is the cell inner membrane. It carries out the reaction GTP + H2O = GDP + phosphate + H(+). Required for accurate and efficient protein synthesis under certain stress conditions. May act as a fidelity factor of the translation reaction, by catalyzing a one-codon backward translocation of tRNAs on improperly translocated ribosomes. Back-translocation proceeds from a post-translocation (POST) complex to a pre-translocation (PRE) complex, thus giving elongation factor G a second chance to translocate the tRNAs correctly. Binds to ribosomes in a GTP-dependent manner. This chain is Elongation factor 4, found in Hydrogenovibrio crunogenus (strain DSM 25203 / XCL-2) (Thiomicrospira crunogena).